The sequence spans 393 residues: MAKKTVRDIDVKGKRVLLRVDFNVPMENGRVADDVKIKEAVPTINYLIGQKARVILVSHLGRPKGRVDERYKMDPVARRLSELLGKTVVKAGDCVGEAARSAVAQMQDGDVVLLENVRFHPEEEKNDEKFARQLAELADVFVNDAFGTAHRAHASTEGVAGFLPAVAGLLMEKELEILGRLLTSPERPFAAVVGGSKVSDKLGVIFNLLTKVDTVIIGGGMANTFLKAQGYSVGKSLLEADKIDLARKLIAEARSREVKLLLPVDVVVAPGPAPGQEQRTVPVDQIPAEWMALDIGPESIRLFTEALRAARTVVWNGPMGVFEMDPFARGTEAIARTLAELNAVTVIGGGDTAAAAKKAGVAGKMTHISTGGGASLEFLEGKQLPGVRALLDK.

Substrate is bound by residues 21–23 (DFN), 59–62 (HLGR), arginine 118, and arginine 151. ATP contacts are provided by residues lysine 201, glutamate 323, and 349–352 (GGDT).

This sequence belongs to the phosphoglycerate kinase family. As to quaternary structure, monomer.

It is found in the cytoplasm. The catalysed reaction is (2R)-3-phosphoglycerate + ATP = (2R)-3-phospho-glyceroyl phosphate + ADP. Its pathway is carbohydrate degradation; glycolysis; pyruvate from D-glyceraldehyde 3-phosphate: step 2/5. The polypeptide is Phosphoglycerate kinase (Pelotomaculum thermopropionicum (strain DSM 13744 / JCM 10971 / SI)).